Reading from the N-terminus, the 443-residue chain is Anamorsin homolog (443 aa).

Residues 136-301 (LSSAPRVLVL…AAGVADALSG (166 aa)) are N-terminal SAM-like domain. The tract at residues 302–331 (NRGALPNGTAQTDGDDFIDESTLIDPTESY) is linker. Cys341, Cys348, Cys351, and Cys353 together coordinate [2Fe-2S] cluster. Positions 341 to 353 (CASRPKACPNCTC) are fe-S binding site A. 4 residues coordinate [4Fe-4S] cluster: Cys380, Cys383, Cys391, and Cys394. Short sequence motifs (cx2C motif) lie at residues 380-383 (CGNC) and 391-394 (CAGC). The interval 380–394 (CGNCYLGDAFRCAGC) is fe-S binding site B.

This sequence belongs to the anamorsin family. Monomer. It depends on [2Fe-2S] cluster as a cofactor. [4Fe-4S] cluster is required as a cofactor.

The protein resides in the cytoplasm. The protein localises to the mitochondrion intermembrane space. Its function is as follows. Component of the cytosolic iron-sulfur (Fe-S) protein assembly (CIA) machinery. Required for the maturation of extramitochondrial Fe-S proteins. Part of an electron transfer chain functioning in an early step of cytosolic Fe-S biogenesis, facilitating the de novo assembly of a [4Fe-4S] cluster on the cytosolic Fe-S scaffold complex. Electrons are transferred from NADPH via a FAD- and FMN-containing diflavin oxidoreductase. Together with the diflavin oxidoreductase, also required for the assembly of the diferric tyrosyl radical cofactor of ribonucleotide reductase (RNR), probably by providing electrons for reduction during radical cofactor maturation in the catalytic small subunit. This chain is Anamorsin homolog, found in Toxoplasma gondii (strain ATCC 50861 / VEG).